The primary structure comprises 218 residues: Cell division protein SepF (218 aa).

The disordered stretch occupies residues 25-115 (DVAASTDNVI…IANRREQYQQ (91 aa)). The span at 29–43 (STDNVIPRSQQSVRA) shows a compositional bias: polar residues. Basic and acidic residues predominate over residues 47–63 (PKQEPRNNHVQQDHQAR).

Belongs to the SepF family. Homodimer. Interacts with FtsZ.

Its subcellular location is the cytoplasm. Cell division protein that is part of the divisome complex and is recruited early to the Z-ring. Probably stimulates Z-ring formation, perhaps through the cross-linking of FtsZ protofilaments. Its function overlaps with FtsA. This Streptococcus pyogenes serotype M12 (strain MGAS2096) protein is Cell division protein SepF.